The chain runs to 209 residues: Ribonuclease HII (209 aa).

Residues 19–209 enclose the RNase H type-2 domain; the sequence is CIIVGVDEVG…LPGITKLYSK (191 aa). Aspartate 25, glutamate 26, and aspartate 118 together coordinate a divalent metal cation.

The protein belongs to the RNase HII family. Requires Mn(2+) as cofactor. The cofactor is Mg(2+).

Its subcellular location is the cytoplasm. It catalyses the reaction Endonucleolytic cleavage to 5'-phosphomonoester.. Endonuclease that specifically degrades the RNA of RNA-DNA hybrids. In Ehrlichia canis (strain Jake), this protein is Ribonuclease HII.